A 178-amino-acid chain; its full sequence is uncharacterized protein (178 aa).

A signal peptide spans 1–19 (MINRKILLTSLLLIFTVLS). Active-site residues include arginine 52, glutamate 60, and arginine 94.

It belongs to the thermonuclease family.

This is an uncharacterized protein from Haemophilus influenzae (strain ATCC 51907 / DSM 11121 / KW20 / Rd).